The chain runs to 91 residues: Probable Fe(2+)-trafficking protein (91 aa).

Belongs to the Fe(2+)-trafficking protein family. Monomer.

Could be a mediator in iron transactions between iron acquisition and iron-requiring processes, such as synthesis and/or repair of Fe-S clusters in biosynthetic enzymes. The chain is Probable Fe(2+)-trafficking protein from Citrobacter koseri (strain ATCC BAA-895 / CDC 4225-83 / SGSC4696).